A 514-amino-acid polypeptide reads, in one-letter code: CENP-B homolog protein 2 (514 aa).

Residues 70–145 enclose the HTH CENPB-type domain; that stretch reads QIRRNRQGKY…KKRCLKHGLK (76 aa). The DDE-1 domain occupies 172–384; it reads FDPKDIFNMD…FEPSIIYNCF (213 aa).

Its subcellular location is the nucleus. The protein localises to the chromosome. It localises to the centromere. Its function is as follows. Binds to the central core and core-associated repeat regions of centromeric heterochromatin. The chain is CENP-B homolog protein 2 (cbh2) from Schizosaccharomyces pombe (strain 972 / ATCC 24843) (Fission yeast).